The sequence spans 213 residues: Pyridoxine/pyridoxamine 5'-phosphate oxidase (213 aa).

Substrate-binding positions include 9-12 (RLEY) and Lys-67. Residues 62-67 (RIVLLK), 77-78 (YT), Arg-83, Lys-84, and Gln-106 each bind FMN. 3 residues coordinate substrate: Tyr-124, Arg-128, and Ser-132. Residues 141–142 (QS) and Trp-185 each bind FMN. 191–193 (RLH) serves as a coordination point for substrate. Arg-195 contributes to the FMN binding site.

It belongs to the pyridoxamine 5'-phosphate oxidase family. Homodimer. FMN serves as cofactor.

The enzyme catalyses pyridoxamine 5'-phosphate + O2 + H2O = pyridoxal 5'-phosphate + H2O2 + NH4(+). It carries out the reaction pyridoxine 5'-phosphate + O2 = pyridoxal 5'-phosphate + H2O2. The protein operates within cofactor metabolism; pyridoxal 5'-phosphate salvage; pyridoxal 5'-phosphate from pyridoxamine 5'-phosphate: step 1/1. It participates in cofactor metabolism; pyridoxal 5'-phosphate salvage; pyridoxal 5'-phosphate from pyridoxine 5'-phosphate: step 1/1. Its function is as follows. Catalyzes the oxidation of either pyridoxine 5'-phosphate (PNP) or pyridoxamine 5'-phosphate (PMP) into pyridoxal 5'-phosphate (PLP). The sequence is that of Pyridoxine/pyridoxamine 5'-phosphate oxidase from Chromobacterium violaceum (strain ATCC 12472 / DSM 30191 / JCM 1249 / CCUG 213 / NBRC 12614 / NCIMB 9131 / NCTC 9757 / MK).